Consider the following 377-residue polypeptide: tRNA pseudouridine synthase Pus10 (377 aa).

The active-site Nucleophile is aspartate 206. Tyrosine 270 and tyrosine 339 together coordinate substrate.

The protein belongs to the pseudouridine synthase Pus10 family.

It catalyses the reaction uridine(54) in tRNA = pseudouridine(54) in tRNA. It carries out the reaction uridine(55) in tRNA = pseudouridine(55) in tRNA. Functionally, responsible for synthesis of pseudouridine from uracil-54 and uracil-55 in the psi GC loop of transfer RNAs. The polypeptide is tRNA pseudouridine synthase Pus10 (Picrophilus torridus (strain ATCC 700027 / DSM 9790 / JCM 10055 / NBRC 100828 / KAW 2/3)).